A 415-amino-acid chain; its full sequence is MLESSSDKIKFAPIKEVDYKKPVSKSKNYTLINDIQPLEWYCHNDSETGYQHTISNKTDGGRGLFRVMKKSMETRVETQTLYFTDLHTGLCGFVQLLYSTVMGGIYKGFQLNFKVFGSESNNTDYDVWESFKLDDIAEFQPLKFVSRNVIFEFLSNKNEKLGSIGQLSIKCDLPTCNNTIQNLKIDLLVDLFQGFKMNPNGCNYYFDKQISMSDEFVSSDKMIRHVFVPRGKCNGNISYDKKLNSGDFQNKNISLTDVPVVYLDAVQGLLPNKAASKWNFLCFQSENYSVLAIEFTTPRDHDNVTVTVWSITEKNKLISIGSSVQSPKRHVRFRATSTDKESGWVYPTSIKFPGGFSEHDLRLVNRYDVLGELPSMVRSLAQKIVSIKPFIYQYCQPSKYKHEKGISIVESTFIS.

The protein belongs to the SVF1 family.

The protein localises to the cytoplasm. The polypeptide is SVF1-like protein YDR222W (Saccharomyces cerevisiae (strain ATCC 204508 / S288c) (Baker's yeast)).